The following is a 38-amino-acid chain: Large ribosomal subunit protein bL36 (38 aa).

Belongs to the bacterial ribosomal protein bL36 family.

In Kosmotoga olearia (strain ATCC BAA-1733 / DSM 21960 / TBF 19.5.1), this protein is Large ribosomal subunit protein bL36.